The primary structure comprises 180 residues: Large ribosomal subunit protein uL5 (180 aa).

Belongs to the universal ribosomal protein uL5 family. As to quaternary structure, part of the 50S ribosomal subunit; part of the 5S rRNA/L5/L18/L25 subcomplex. Contacts the 5S rRNA and the P site tRNA. Forms a bridge to the 30S subunit in the 70S ribosome.

Its function is as follows. This is one of the proteins that bind and probably mediate the attachment of the 5S RNA into the large ribosomal subunit, where it forms part of the central protuberance. In the 70S ribosome it contacts protein S13 of the 30S subunit (bridge B1b), connecting the 2 subunits; this bridge is implicated in subunit movement. Contacts the P site tRNA; the 5S rRNA and some of its associated proteins might help stabilize positioning of ribosome-bound tRNAs. The polypeptide is Large ribosomal subunit protein uL5 (Xanthomonas euvesicatoria pv. vesicatoria (strain 85-10) (Xanthomonas campestris pv. vesicatoria)).